The following is a 281-amino-acid chain: Probable endonuclease 4 (281 aa).

9 residues coordinate Zn(2+): His-69, His-109, Glu-145, Asp-179, His-182, His-216, Asp-229, His-231, and Glu-261.

Belongs to the AP endonuclease 2 family. Zn(2+) serves as cofactor.

The enzyme catalyses Endonucleolytic cleavage to 5'-phosphooligonucleotide end-products.. Endonuclease IV plays a role in DNA repair. It cleaves phosphodiester bonds at apurinic or apyrimidinic (AP) sites, generating a 3'-hydroxyl group and a 5'-terminal sugar phosphate. In Yersinia enterocolitica serotype O:8 / biotype 1B (strain NCTC 13174 / 8081), this protein is Probable endonuclease 4.